The following is a 448-amino-acid chain: Phosphoglucosamine mutase (448 aa).

Ser-100 serves as the catalytic Phosphoserine intermediate. Ser-100, Asp-240, Asp-242, and Asp-244 together coordinate Mg(2+). Position 100 is a phosphoserine (Ser-100).

It belongs to the phosphohexose mutase family. Mg(2+) is required as a cofactor. Activated by phosphorylation.

The enzyme catalyses alpha-D-glucosamine 1-phosphate = D-glucosamine 6-phosphate. In terms of biological role, catalyzes the conversion of glucosamine-6-phosphate to glucosamine-1-phosphate. This chain is Phosphoglucosamine mutase, found in Bacillus mycoides (strain KBAB4) (Bacillus weihenstephanensis).